We begin with the raw amino-acid sequence, 206 residues long: Translation initiation factor IF-3 (206 aa).

The protein belongs to the IF-3 family. Monomer.

It localises to the cytoplasm. Functionally, IF-3 binds to the 30S ribosomal subunit and shifts the equilibrium between 70S ribosomes and their 50S and 30S subunits in favor of the free subunits, thus enhancing the availability of 30S subunits on which protein synthesis initiation begins. The protein is Translation initiation factor IF-3 of Shigella flexneri.